The sequence spans 622 residues: Chaperone protein HscA homolog (622 aa).

Belongs to the heat shock protein 70 family.

Chaperone involved in the maturation of iron-sulfur cluster-containing proteins. Has a low intrinsic ATPase activity which is markedly stimulated by HscB. This Burkholderia lata (strain ATCC 17760 / DSM 23089 / LMG 22485 / NCIMB 9086 / R18194 / 383) protein is Chaperone protein HscA homolog.